Consider the following 97-residue polypeptide: Citrate lyase acyl carrier protein (97 aa).

Serine 14 is modified (O-(phosphoribosyl dephospho-coenzyme A)serine).

It belongs to the CitD family. In terms of assembly, oligomer with a subunit composition of (alpha,beta,gamma)6.

The protein localises to the cytoplasm. Functionally, covalent carrier of the coenzyme of citrate lyase. The chain is Citrate lyase acyl carrier protein from Yersinia enterocolitica serotype O:8 / biotype 1B (strain NCTC 13174 / 8081).